Consider the following 265-residue polypeptide: Neuronal membrane glycoprotein M6-b (265 aa).

The chain crosses the membrane as a helical span at residues 31-51; it reads GGVPYASLVATILCFSGVALF. Asn-73 is a glycosylation site (N-linked (GlcNAc...) asparagine). The next 2 helical transmembrane spans lie at 90–110 and 136–156; these read VIYGIASFFFLYGIILLAEGF and FVFLTYVLGVAWLGVFGFSAV. A glycan (N-linked (GlcNAc...) asparagine) is linked at Asn-177. The chain crosses the membrane as a helical span at residues 224–244; that stretch reads LFIVACAGAGATVIALLIYMM. At Ser-257 the chain carries Phosphoserine.

This sequence belongs to the myelin proteolipid protein family. In terms of assembly, interacts with SERT. As to expression, highly expressed in the ventral medullary surface, moderately in the cerebral cortex and cerebellum, poorly in lung and kidney, and not at all in heart, skeletal muscle, liver, stomach or stomach.

The protein localises to the membrane. It localises to the cell membrane. May be involved in neural development. Involved in regulation of osteoblast function and bone formation. Involved in matrix vesicle release by osteoblasts; this function seems to involve maintenance of the actin cytoskeleton. May be involved in cellular trafficking of SERT and thereby in regulation of serotonin uptake. This is Neuronal membrane glycoprotein M6-b (Gpm6b) from Rattus norvegicus (Rat).